The chain runs to 320 residues: Lactamase-like protein GME11357 (320 aa).

Residues H106, H108, D110, and H111 each coordinate Zn(2+). The Proton donor/acceptor role is filled by D110.

It belongs to the metallo-beta-lactamase superfamily. The cofactor is Zn(2+).

It participates in secondary metabolite biosynthesis. In terms of biological role, lactamase-like protein; part of the gene cluster that mediates the biosynthesis of dibenzodioxocinones such as pestalotiollide B, a novel class of inhibitors against cholesterol ester transfer protein (CEPT). The biosynthesis initiates from condensation of acetate and malonate units catalyzed by the non-reducing PKS pks8/GME11356. Pks8/GME11356 lacks a thioesterase (TE) domain, which is important to the cyclizing of the third ring of atrochrysone carboxylic acid, and the esterase GME11355 might play the role of TE and catalyzes the cyclization reaction of the C ring. The lactamase-like protein GME11357 (or other beta-lactamases in Pestalotiopsis microspora) probably hydrolyzes the thioester bond between the ACP of pks8/GME11356 and the intermediate to release atrochrysone carboxylic acid, which is spontaneously dehydrates to form endocrocin anthrone. Endocrocin anthrone is further converted to emodin via the endocrocin intermediate. Emodin is then oxidized by several enzymes such as the Baeyer-Villiger oxidase GME11358, the oxidoreductase GME11367, the short chain dehydrogenase/reductase GME11373, as well as by other oxidoreductases from the cluster, to modify the A and C rings and open the B ring, and finally yield monodictyphenone. The prenyltransferase GME11375 may catalyze the addition reaction between the C5 side chains and the carbon bone of dibenzodioxocinones. The remaining biochemical reactions to the final product dibenzodioxocinones should be methylation catalyzed by methyltransferase GME11366 and reduction and lactonization reaction catalyzed by a series of oxidordeuctases. This Pestalotiopsis microspora protein is Lactamase-like protein GME11357.